A 527-amino-acid chain; its full sequence is Anthranilate synthase component 1 1 (527 aa).

S52 is a binding site for L-tryptophan. The disordered stretch occupies residues 53–72 (AEKTPASDPDGAFTPDTTTE). Position 298 to 300 (298 to 300 (PYM)) interacts with L-tryptophan. 333-334 (GT) serves as a coordination point for chorismate. E360 lines the Mg(2+) pocket. Chorismate-binding positions include Y448, R468, 486–488 (GAG), and G488. E501 is a Mg(2+) binding site.

This sequence belongs to the anthranilate synthase component I family. Tetramer of two components I and two components II. The cofactor is Mg(2+).

The catalysed reaction is chorismate + L-glutamine = anthranilate + pyruvate + L-glutamate + H(+). Its pathway is amino-acid biosynthesis; L-tryptophan biosynthesis; L-tryptophan from chorismate: step 1/5. The chain is Anthranilate synthase component 1 1 (trpE1) from Halobacterium salinarum (strain ATCC 700922 / JCM 11081 / NRC-1) (Halobacterium halobium).